We begin with the raw amino-acid sequence, 226 residues long: Probable septum site-determining protein MinC (226 aa).

Belongs to the MinC family. In terms of assembly, interacts with MinD and FtsZ.

Its function is as follows. Cell division inhibitor that blocks the formation of polar Z ring septums. Rapidly oscillates between the poles of the cell to destabilize FtsZ filaments that have formed before they mature into polar Z rings. Prevents FtsZ polymerization. The chain is Probable septum site-determining protein MinC from Bacillus velezensis (strain DSM 23117 / BGSC 10A6 / LMG 26770 / FZB42) (Bacillus amyloliquefaciens subsp. plantarum).